The primary structure comprises 393 residues: MSDQVKITPMTLNFGPQHPAAHGVMRLVLEMGGEVIERIDPHIGLLHRGTEKLIEYKTYLQALPYFDRLDYVSPMAQEHAYSLCVEKLLKCEIPIRAKYLRVIFCELTRILNHLLNISSQALDIGAMTPLLWMFEEREKILGFYERASGARFHSAYIRPGGVAADVPSDLIDDIFKFVSTFSKFMDDIDDLLTENRIWKQRNVDIGVVSKKQALDWGFSGPMLRACGIPWDLRKSQPYEIYEDLEFEIPVGENGDCYDRYLVRMAEIRQSIKLLEQCLDRLPDGPVKTDDRKIAPPKRSEMKESMEALIHHFKLYSEGYSVPVGETYMAVEAPKGEFGVYIVSDGTNKPYRCRIRAPGFAHLQAIDIIAKGHMLADLTAIIGSLDIVFGEIDR.

The protein belongs to the complex I 49 kDa subunit family. As to quaternary structure, NDH-1 is composed of 14 different subunits. Subunits NuoB, C, D, E, F, and G constitute the peripheral sector of the complex.

Its subcellular location is the cell inner membrane. It carries out the reaction a quinone + NADH + 5 H(+)(in) = a quinol + NAD(+) + 4 H(+)(out). NDH-1 shuttles electrons from NADH, via FMN and iron-sulfur (Fe-S) centers, to quinones in the respiratory chain. The immediate electron acceptor for the enzyme in this species is believed to be ubiquinone. Couples the redox reaction to proton translocation (for every two electrons transferred, four hydrogen ions are translocated across the cytoplasmic membrane), and thus conserves the redox energy in a proton gradient. This chain is NADH-quinone oxidoreductase subunit D, found in Ehrlichia canis (strain Jake).